We begin with the raw amino-acid sequence, 1002 residues long: yemanuclein (1002 aa).

The Nuclear localization signal motif lies at lysine 80–lysine 85. Disordered regions lie at residues alanine 193–valine 358, valine 395–asparagine 428, and lysine 642–valine 725. Residues serine 207–serine 217 show a composition bias toward low complexity. The span at glycine 218 to serine 262 shows a compositional bias: acidic residues. 2 consecutive repeat copies span residues glutamate 230 to glutamate 241 and glutamate 242 to glutamate 253. Residues glutamate 230–glutamate 253 are 2 X 12 AA tandem repeats. Low complexity-rich tracts occupy residues threonine 286–threonine 320, glutamine 336–valine 358, and valine 395–serine 404. Residues glutamate 408–glutamate 427 show a composition bias toward basic and acidic residues. Positions proline 653–proline 667 are enriched in low complexity. Over residues alanine 679 to serine 689 the composition is skewed to basic and acidic residues. 2 positions are modified to phosphoserine: serine 685 and serine 689. Low complexity predominate over residues aspartate 690 to serine 701. Residues serine 885, serine 886, and serine 887 each carry the phosphoserine modification. Residues serine 901–glutamine 928 form a disordered region. Positions proline 903–asparagine 917 are enriched in basic residues.

Post-translationally, the N-terminus is blocked. In terms of tissue distribution, oocyte specific.

The protein resides in the nucleus. It localises to the nucleoplasm. Its subcellular location is the chromosome. The protein localises to the centromere. It is found in the kinetochore. May play a key role in egg organization. May be a transcriptional regulator having a role in chromatin remodeling in concert with Hira, a histone chaperone. Involved in chromosome segregation by affecting kinetochores function in the first meiotic division. The sequence is that of yemanuclein from Drosophila melanogaster (Fruit fly).